The following is a 447-amino-acid chain: Probable glycine dehydrogenase (decarboxylating) subunit 1 (447 aa).

The protein belongs to the GcvP family. N-terminal subunit subfamily. In terms of assembly, the glycine cleavage system is composed of four proteins: P, T, L and H. In this organism, the P 'protein' is a heterodimer of two subunits.

It catalyses the reaction N(6)-[(R)-lipoyl]-L-lysyl-[glycine-cleavage complex H protein] + glycine + H(+) = N(6)-[(R)-S(8)-aminomethyldihydrolipoyl]-L-lysyl-[glycine-cleavage complex H protein] + CO2. In terms of biological role, the glycine cleavage system catalyzes the degradation of glycine. The P protein binds the alpha-amino group of glycine through its pyridoxal phosphate cofactor; CO(2) is released and the remaining methylamine moiety is then transferred to the lipoamide cofactor of the H protein. The sequence is that of Probable glycine dehydrogenase (decarboxylating) subunit 1 from Bacillus thuringiensis subsp. konkukian (strain 97-27).